The following is a 353-amino-acid chain: Photosystem II protein D1 (353 aa).

Thr2 bears the N-acetylthreonine mark. Thr2 carries the phosphothreonine modification. 3 consecutive transmembrane segments (helical) span residues 29–46 (YIGW…TATS), 118–133 (HFLL…EWEL), and 142–156 (WIAV…AATA). Residue His118 coordinates chlorophyll a. Tyr126 is a pheophytin a binding site. [CaMn4O5] cluster-binding residues include Asp170 and Glu189. The helical transmembrane segment at 197 to 218 (FHMLGVAGVFGGSLFSAMHGSL) threads the bilayer. His198 contacts chlorophyll a. Residues His215 and 264-265 (SF) each bind a quinone. His215 lines the Fe cation pocket. His272 is a binding site for Fe cation. Residues 274–288 (FLAAWPVVGIWFTAL) form a helical membrane-spanning segment. Residues His332, Glu333, Asp342, and Ala344 each coordinate [CaMn4O5] cluster. The propeptide occupies 345–353 (SIEAPLVNG).

It belongs to the reaction center PufL/M/PsbA/D family. PSII is composed of 1 copy each of membrane proteins PsbA, PsbB, PsbC, PsbD, PsbE, PsbF, PsbH, PsbI, PsbJ, PsbK, PsbL, PsbM, PsbT, PsbX, PsbY, PsbZ, Psb30/Ycf12, at least 3 peripheral proteins of the oxygen-evolving complex and a large number of cofactors. It forms dimeric complexes. Requires The D1/D2 heterodimer binds P680, chlorophylls that are the primary electron donor of PSII, and subsequent electron acceptors. It shares a non-heme iron and each subunit binds pheophytin, quinone, additional chlorophylls, carotenoids and lipids. D1 provides most of the ligands for the Mn4-Ca-O5 cluster of the oxygen-evolving complex (OEC). There is also a Cl(-1) ion associated with D1 and D2, which is required for oxygen evolution. The PSII complex binds additional chlorophylls, carotenoids and specific lipids. as cofactor. Tyr-161 forms a radical intermediate that is referred to as redox-active TyrZ, YZ or Y-Z. Post-translationally, C-terminally processed by CTPA; processing is essential to allow assembly of the oxygen-evolving complex and thus photosynthetic growth.

The protein resides in the plastid. The protein localises to the chloroplast thylakoid membrane. It catalyses the reaction 2 a plastoquinone + 4 hnu + 2 H2O = 2 a plastoquinol + O2. Functionally, photosystem II (PSII) is a light-driven water:plastoquinone oxidoreductase that uses light energy to abstract electrons from H(2)O, generating O(2) and a proton gradient subsequently used for ATP formation. It consists of a core antenna complex that captures photons, and an electron transfer chain that converts photonic excitation into a charge separation. The D1/D2 (PsbA/PsbD) reaction center heterodimer binds P680, the primary electron donor of PSII as well as several subsequent electron acceptors. In Psilotum nudum (Whisk fern), this protein is Photosystem II protein D1.